The primary structure comprises 305 residues: Superkiller complex protein 8 (305 aa).

WD repeat units follow at residues 14-57 (AHED…LELQ), 62-101 (GHQL…QIKS), 104-143 (AGPV…KEHS), 146-187 (TRGK…HTLE), 188-227 (GHAM…LAGT), 230-269 (GHGS…CVNT), and 272-305 (DHQD…DCPM).

This sequence belongs to the SKI8 family. In terms of assembly, component of the PAF1 complex. Component of the SKI complex.

The protein localises to the nucleus. Its subcellular location is the cytoplasm. In terms of biological role, component of the PAF1 complex (PAF1C) which has multiple functions during transcription by RNA polymerase II and is implicated in regulation of development and maintenance of embryonic stem cell pluripotency. PAF1C associates with RNA polymerase II through interaction with POLR2A CTD non-phosphorylated and 'Ser-2'- and 'Ser-5'-phosphorylated forms and is involved in transcriptional elongation, acting both independently and synergistically with TCEA1 and in cooperation with the DSIF complex and HTATSF1. Also acts as a component of the SKI complex, a multiprotein complex that assists the RNA-degrading exosome during the mRNA decay and quality-control pathways. The SKI complex catalyzes mRNA extraction from 80S ribosomal complexes in the 3'-5' direction and channels mRNA to the cytosolic exosome for degradation. The chain is Superkiller complex protein 8 (skic8) from Danio rerio (Zebrafish).